The sequence spans 291 residues: Mitochondrial thiamine pyrophosphate carrier 1 (291 aa).

Transmembrane regions (helical) follow at residues 12 to 31, 83 to 99, 120 to 141, 167 to 191, 214 to 230, and 265 to 282; these read GATASVYHTLVAGSVSGAVA, IMYILYGATQFTSYSMF, SLIVGTSAGLTSLIVTYPFDLL, GGLAGLYMGAKPTLLSLGLNSGLMF, FCGFFAGASSKGITFPL, and GFGISLIKTAPTSAVSLF. 3 Solcar repeats span residues 15 to 102, 115 to 200, and 207 to 290; these read ASVY…FSKA, RPSN…AREV, and NIPF…VLNG.

This sequence belongs to the mitochondrial carrier (TC 2.A.29) family.

It localises to the mitochondrion inner membrane. In terms of biological role, mitochondrial transporter that mediates uptake of thiamine pyrophosphate (ThPP) into mitochondria. The chain is Mitochondrial thiamine pyrophosphate carrier 1 (TPC1) from Meyerozyma guilliermondii (strain ATCC 6260 / CBS 566 / DSM 6381 / JCM 1539 / NBRC 10279 / NRRL Y-324) (Yeast).